The primary structure comprises 293 residues: Release factor glutamine methyltransferase (293 aa).

S-adenosyl-L-methionine is bound by residues 130 to 134, aspartate 153, tryptophan 182, and asparagine 199; that span reads GTGSG. Substrate is bound at residue 199 to 202; sequence NPPY.

This sequence belongs to the protein N5-glutamine methyltransferase family. PrmC subfamily.

The enzyme catalyses L-glutaminyl-[peptide chain release factor] + S-adenosyl-L-methionine = N(5)-methyl-L-glutaminyl-[peptide chain release factor] + S-adenosyl-L-homocysteine + H(+). Functionally, methylates the class 1 translation termination release factors RF1/PrfA and RF2/PrfB on the glutamine residue of the universally conserved GGQ motif. The polypeptide is Release factor glutamine methyltransferase (Prochlorococcus marinus (strain SARG / CCMP1375 / SS120)).